Consider the following 255-residue polypeptide: Glioma pathogenesis-related protein 1 (255 aa).

The N-terminal stretch at 1-17 (MQVILAVIVWMASSVSS) is a signal peptide. Positions 39-164 (QVHNQLRSKV…PNGANFICDY (126 aa)) constitute an SCP domain. The chain crosses the membrane as a helical span at residues 224 to 244 (SLFLIAKSVLLLLSVIITIWV).

This sequence belongs to the CRISP family.

Its subcellular location is the membrane. This Mus musculus (Mouse) protein is Glioma pathogenesis-related protein 1 (Glipr1).